The sequence spans 328 residues: Leucine carboxyl methyltransferase 1 (328 aa).

S-adenosyl-L-methionine is bound by residues arginine 81, glycine 105, aspartate 128, 175-177 (DLN), and glutamate 201.

It belongs to the methyltransferase superfamily. LCMT family.

It catalyses the reaction [phosphatase 2A protein]-C-terminal L-leucine + S-adenosyl-L-methionine = [phosphatase 2A protein]-C-terminal L-leucine methyl ester + S-adenosyl-L-homocysteine. Its activity is regulated as follows. Inhibited by S-adenosyl-L-homocysteine. Its function is as follows. Methylates the carboxyl group of the C-terminal leucine residue of protein phosphatase 2A catalytic subunits to form alpha-leucine ester residues. Acts on the two major protein phosphatase 2A catalytic subunits, PPH21 and PPH22. The chain is Leucine carboxyl methyltransferase 1 (PPM1) from Saccharomyces cerevisiae (strain ATCC 204508 / S288c) (Baker's yeast).